Here is a 429-residue protein sequence, read N- to C-terminus: GTPase Obg (429 aa).

Residues 1-158 (MFVDQVKIYV…RNVQLELKVL (158 aa)) enclose the Obg domain. The interval 124-145 (RGNKRFATPANPAPELSENGEP) is disordered. An OBG-type G domain is found at 159 to 329 (ADVGLVGFPS…LLLAIADKLE (171 aa)). Residues 165–172 (GFPSVGKS), 190–194 (FTTIV), 212–215 (DLPG), 282–285 (NKMD), and 310–312 (SAV) each bind GTP. 2 residues coordinate Mg(2+): Ser172 and Thr192. One can recognise an OCT domain in the interval 351–429 (KYIAEEPDFE…LLDYEFEFMD (79 aa)).

It belongs to the TRAFAC class OBG-HflX-like GTPase superfamily. OBG GTPase family. In terms of assembly, monomer. Requires Mg(2+) as cofactor.

The protein localises to the cytoplasm. Functionally, an essential GTPase which binds GTP, GDP and possibly (p)ppGpp with moderate affinity, with high nucleotide exchange rates and a fairly low GTP hydrolysis rate. Plays a role in control of the cell cycle, stress response, ribosome biogenesis and in those bacteria that undergo differentiation, in morphogenesis control. This is GTPase Obg from Listeria welshimeri serovar 6b (strain ATCC 35897 / DSM 20650 / CCUG 15529 / CIP 8149 / NCTC 11857 / SLCC 5334 / V8).